The sequence spans 531 residues: Flavin-containing monooxygenase 3 (531 aa).

FAD is bound by residues 9–13 (GAGVS), glutamate 32, 40–41 (LW), and 61–62 (NS). Residues 60-61 (TN) and 195-198 (SGCD) contribute to the NADP(+) site. Phosphoserine is present on serine 401. A helical membrane pass occupies residues 511–531 (YSHFLRLLAVPVLIALFLVLI).

It belongs to the FMO family. FAD is required as a cofactor. As to expression, detected in liver and kidney (at protein level). Expressed in kidney and liver. Weakly expressed in lung. Does not seem to be expressed in brain, adipose tissue, or muscle.

It localises to the microsome membrane. The protein localises to the endoplasmic reticulum membrane. It catalyses the reaction trimethylamine + NADPH + O2 = trimethylamine N-oxide + NADP(+) + H2O. It carries out the reaction N,N-dimethylaniline + NADPH + O2 + H(+) = N,N-dimethylaniline N-oxide + NADP(+) + H2O. The catalysed reaction is hypotaurine + NADPH + O2 + H(+) = taurine + NADP(+) + H2O. The enzyme catalyses (S)-nicotine + NADPH + O2 = trans-(S)-nicotine N(1')-oxide + NADP(+) + H2O. It catalyses the reaction albendazole + NADPH + O2 + H(+) = albendazole S-oxide + NADP(+) + H2O. Its function is as follows. Essential hepatic enzyme that catalyzes the oxygenation of a wide variety of nitrogen- and sulfur-containing compounds including drugs as well as dietary compounds. Plays an important role in the metabolism of trimethylamine (TMA), via the production of trimethylamine N-oxide (TMAO) metabolite. TMA is generated by the action of gut microbiota using dietary precursors such as choline, choline containing compounds, betaine or L-carnitine. By regulating TMAO concentration, FMO3 directly impacts both platelet responsiveness and rate of thrombus formation. The sequence is that of Flavin-containing monooxygenase 3 (Fmo3) from Rattus norvegicus (Rat).